The following is a 229-amino-acid chain: Triosephosphate isomerase (229 aa).

9-11 (NYK) is a substrate binding site. The Electrophile role is filled by H93. The active-site Proton acceptor is E141. Residues I146, G180, and 201 to 202 (AS) each bind substrate.

It belongs to the triosephosphate isomerase family. As to quaternary structure, homotetramer; dimer of dimers.

It localises to the cytoplasm. The catalysed reaction is D-glyceraldehyde 3-phosphate = dihydroxyacetone phosphate. The protein operates within carbohydrate biosynthesis; gluconeogenesis. It participates in carbohydrate degradation; glycolysis; D-glyceraldehyde 3-phosphate from glycerone phosphate: step 1/1. Involved in the gluconeogenesis. Catalyzes stereospecifically the conversion of dihydroxyacetone phosphate (DHAP) to D-glyceraldehyde-3-phosphate (G3P). The protein is Triosephosphate isomerase of Sulfurisphaera tokodaii (strain DSM 16993 / JCM 10545 / NBRC 100140 / 7) (Sulfolobus tokodaii).